The sequence spans 130 residues: Flagellar assembly factor FliW (130 aa).

It belongs to the FliW family. Interacts with translational regulator CsrA and flagellin(s).

It is found in the cytoplasm. In terms of biological role, acts as an anti-CsrA protein, binds CsrA and prevents it from repressing translation of its target genes, one of which is flagellin. Binds to flagellin and participates in the assembly of the flagellum. This is Flagellar assembly factor FliW from Borrelia duttonii (strain Ly).